Consider the following 382-residue polypeptide: Nuclear hormone receptor family member nhr-106 (382 aa).

Residues glutamine 2–valine 78 constitute a DNA-binding region (nuclear receptor). 2 NR C4-type zinc fingers span residues cysteine 5–cysteine 25 and cysteine 42–cysteine 61. The NR LBD domain occupies aspartate 110 to serine 380.

This sequence belongs to the nuclear hormone receptor family.

The protein localises to the nucleus. Functionally, orphan nuclear receptor. This chain is Nuclear hormone receptor family member nhr-106 (nhr-106), found in Caenorhabditis elegans.